The following is a 685-amino-acid chain: Putative mannosyltransferase YycA (685 aa).

The next 6 membrane-spanning stretches (helical) occupy residues 6-26 (FDAALILILLAAAFLNTYHIW), 68-88 (VLWIQTIFALIFGVHTWSVII), 109-129 (FGVGAARIAALVMALTPIAVA), 154-174 (AVKQGKLVWLLTAFALIGLAF), 176-196 (MKMMQAFMVLPAFVLFYLIAS), and 204-224 (IGSLLLSLVLLTGLSLSWAIA). The interval 269–347 (MNAAGGGNMQ…GGGGGKSVNM (79 aa)) is disordered. Positions 277–286 (MQNQDNMQAP) are enriched in polar residues. Positions 287 to 303 (NGNGSSFSQNGNQSFGN) are enriched in low complexity. Residues 318-343 (LNGGGGTPPTGGNGPGNGGPGGGGGK) are compositionally biased toward gly residues. 7 consecutive transmembrane segments (helical) span residues 363-383 (LSGQISWMLPFSLIGLLGAII), 399-419 (TLFWAAWLVPVAGFFSIAGFF), 422-442 (YYLIMLAPPIAALSGIGWYTM), 455-475 (YLLPAAVLITAVFQVYILSAY), 479-499 (IGSVWMYVLGLLGLGITLALL), 513-533 (IISLCVLLLTPVYWSATPLLY), and 573-593 (TGEEYLFATLTTVTAAPYIIY). The disordered stretch occupies residues 652–685 (TSDEYSGSSSSTNSVQGMRRGPGGESQQTLYLVE). Residues 654 to 665 (DEYSGSSSSTNS) show a composition bias toward low complexity. Residues 676–685 (ESQQTLYLVE) show a composition bias toward polar residues.

The protein belongs to the glycosyltransferase 39 family.

The protein resides in the cell membrane. The chain is Putative mannosyltransferase YycA (yycA) from Bacillus subtilis (strain 168).